Here is a 279-residue protein sequence, read N- to C-terminus: DegV domain-containing protein M6_Spy1246 (279 aa).

Residues I4–Y278 form the DegV domain. Positions 62 and 95 each coordinate hexadecanoate.

Functionally, may bind long-chain fatty acids, such as palmitate, and may play a role in lipid transport or fatty acid metabolism. This Streptococcus pyogenes serotype M6 (strain ATCC BAA-946 / MGAS10394) protein is DegV domain-containing protein M6_Spy1246.